The primary structure comprises 532 residues: Fe-S cluster assembly factor HCF101, chloroplastic (532 aa).

A chloroplast-targeting transit peptide spans 1–61; it reads MPLLHPQSLR…RVSQNLSVAK (61 aa). Alanine 62 carries the post-translational modification N-acetylalanine. 184 to 191 is an ATP binding site; it reads CKGGVGKS.

The protein belongs to the Mrp/NBP35 ATP-binding proteins family. [4Fe-4S] cluster is required as a cofactor. In terms of tissue distribution, expressed in aerial tissues exposed to light. Very low expression in roots.

The protein localises to the plastid. The protein resides in the chloroplast stroma. Required for photosystem I (PSI) biosynthesis and assembly. May serve as a chloroplast scaffold protein that specifically assembles iron-sulfur (4Fe-4S) clusters and transfers them to the chloroplast PSI and ferredoxin-thioredoxin (FTR) complexes. Can assemble a 4Fe-4S cluster and transfer it to apoproteins in yeast cells. Probably not required for assembly or stability of plastidic 2Fe-2S clusters. In Arabidopsis thaliana (Mouse-ear cress), this protein is Fe-S cluster assembly factor HCF101, chloroplastic (HCF101).